The sequence spans 449 residues: Tubulin alpha-1C chain (449 aa).

The MREC motif motif lies at 1–4 (MREC). Gln-11 serves as a coordination point for GTP. Lys-40 carries the post-translational modification N6-acetyllysine. GTP contacts are provided by Glu-71, Ser-140, Gly-144, Thr-145, Thr-179, Asn-206, and Asn-228. Glu-71 is a Mg(2+) binding site. Residue Glu-254 is part of the active site. Position 282 is a 3'-nitrotyrosine (Tyr-282). Tyr-432 is subject to Phosphotyrosine. At Ser-439 the chain carries Phosphoserine. Tyr-449 carries the 3'-nitrotyrosine modification.

The protein belongs to the tubulin family. As to quaternary structure, dimer of alpha and beta chains. A typical microtubule is a hollow water-filled tube with an outer diameter of 25 nm and an inner diameter of 15 nM. Alpha-beta heterodimers associate head-to-tail to form protofilaments running lengthwise along the microtubule wall with the beta-tubulin subunit facing the microtubule plus end conferring a structural polarity. Microtubules usually have 13 protofilaments but different protofilament numbers can be found in some organisms and specialized cells. Requires Mg(2+) as cofactor. Post-translationally, some glutamate residues at the C-terminus are polyglycylated, resulting in polyglycine chains on the gamma-carboxyl group. Glycylation is mainly limited to tubulin incorporated into axonemes (cilia and flagella) whereas glutamylation is prevalent in neuronal cells, centrioles, axonemes, and the mitotic spindle. Both modifications can coexist on the same protein on adjacent residues, and lowering polyglycylation levels increases polyglutamylation, and reciprocally. Cilia and flagella glycylation is required for their stability and maintenance. Flagella glycylation controls sperm motility. Some glutamate residues at the C-terminus are polyglutamylated, resulting in polyglutamate chains on the gamma-carboxyl group. Polyglutamylation plays a key role in microtubule severing by spastin (SPAST). SPAST preferentially recognizes and acts on microtubules decorated with short polyglutamate tails: severing activity by SPAST increases as the number of glutamates per tubulin rises from one to eight, but decreases beyond this glutamylation threshold. Glutamylation is also involved in cilia motility. In terms of processing, acetylation of alpha chains at Lys-40 is located inside the microtubule lumen. This modification has been correlated with increased microtubule stability, intracellular transport and ciliary assembly. Post-translationally, methylation of alpha chains at Lys-40 is found in mitotic microtubules and is required for normal mitosis and cytokinesis contributing to genomic stability. Nitration of Tyr-449 is irreversible and interferes with normal dynein intracellular distribution. In terms of processing, undergoes a tyrosination/detyrosination cycle, the cyclic removal and re-addition of a C-terminal tyrosine residue by the enzymes tubulin tyrosine carboxypeptidase (MATCAP1, VASH1 or VASH2) and tubulin tyrosine ligase (TTL), respectively. Post-translationally, tyrosination promotes microtubule interaction with CAP-Gly domain-containing proteins such as CLIP1, CLIP2 and DCTN1. Tyrosination regulates the initiation of dynein-dynactin motility via interaction with DCTN1, which brings the dynein-dynactin complex into contact with microtubules. In neurons, tyrosinated tubulins mediate the initiation of retrograde vesicle transport. Detyrosination is involved in metaphase plate congression by guiding chromosomes during mitosis: detyrosination promotes interaction with CENPE, promoting pole-proximal transport of chromosomes toward the equator. Detyrosination increases microtubules-dependent mechanotransduction in dystrophic cardiac and skeletal muscle. In cardiomyocytes, detyrosinated microtubules are required to resist to contractile compression during contraction: detyrosination promotes association with desmin (DES) at force-generating sarcomeres, leading to buckled microtubules and mechanical resistance to contraction.

It is found in the cytoplasm. Its subcellular location is the cytoskeleton. It catalyses the reaction GTP + H2O = GDP + phosphate + H(+). Functionally, tubulin is the major constituent of microtubules, a cylinder consisting of laterally associated linear protofilaments composed of alpha- and beta-tubulin heterodimers. Microtubules grow by the addition of GTP-tubulin dimers to the microtubule end, where a stabilizing cap forms. Below the cap, tubulin dimers are in GDP-bound state, owing to GTPase activity of alpha-tubulin. The protein is Tubulin alpha-1C chain (Tuba1c) of Rattus norvegicus (Rat).